The sequence spans 240 residues: Sugar fermentation stimulation protein homolog (240 aa).

This sequence belongs to the SfsA family.

The sequence is that of Sugar fermentation stimulation protein homolog from Saccharolobus solfataricus (strain ATCC 35092 / DSM 1617 / JCM 11322 / P2) (Sulfolobus solfataricus).